We begin with the raw amino-acid sequence, 108 residues long: UPF0102 protein Sbal_4100 (108 aa).

The protein belongs to the UPF0102 family.

The polypeptide is UPF0102 protein Sbal_4100 (Shewanella baltica (strain OS155 / ATCC BAA-1091)).